A 142-amino-acid chain; its full sequence is MGNGINAGRKLLENRKKFRWSDRDYKRRVLQLKRKSDPLEGAPQAKGIAIEKVGIEAKQPNSAIRKCVKVQLIKNGRQITAFAVGDGAINYIDEHDEVTVEGIGGRMGRSKGDIPGVRYKVVAVNGISLKELVKGRKEKTVR.

Belongs to the universal ribosomal protein uS12 family. Part of the 30S ribosomal subunit.

Its function is as follows. With S4 and S5 plays an important role in translational accuracy. Located at the interface of the 30S and 50S subunits. In Thermoplasma acidophilum (strain ATCC 25905 / DSM 1728 / JCM 9062 / NBRC 15155 / AMRC-C165), this protein is Small ribosomal subunit protein uS12.